Reading from the N-terminus, the 1009-residue chain is Epstein-Barr nuclear antigen 6 (1009 aa).

6 disordered regions span residues 1–70, 356–504, 516–646, 663–922, 948–971, and 984–1009; these read MESF…RGWM, TVGE…GACV, VETT…PRPS, QPIQ…DSMA, PLDI…PARC, and DNSE…SELD. Over residues 12–31 the composition is skewed to basic and acidic residues; it reads QSPDNERGDNVQTTGEHDQD. Over residues 381–391 the composition is skewed to acidic residues; it reads VELESSDDELP. The segment covering 445–461 has biased composition (polar residues); that stretch reads AQSTPERPGPSEQSSVT. 2 stretches are compositionally biased toward pro residues: residues 479 to 495 and 563 to 574; these read QPPP…TPPP and AAGPPAAGPPAA. 2 stretches are compositionally biased toward polar residues: residues 622–641 and 664–679; these read EITQ…TQPT and PIQS…TQPI. Basic and acidic residues predominate over residues 680-689; the sequence is SHEEQPRYED. 2 stretches are compositionally biased toward low complexity: residues 710–769 and 776–798; these read APYQ…GYQE and PYQG…EPPA. Residues 862–874 are compositionally biased toward polar residues; that stretch reads DQVSQFPHLQSET. Residues 876–898 are compositionally biased toward low complexity; sequence PPRLQLSSVPLVSSSAPSWSSPQ. The segment covering 899-916 has biased composition (pro residues); the sequence is PRAPIRPIPTRFPPPPMP.

This sequence belongs to the herpesviridae EBNA-6 family. Interacts with host CTPB1; this interaction leads to gene repression, but also seems to interfere with the repressive function of CtBP pre-bound to DNA, leading to EBNA6 mediated up-regulation of many host genes. Interacts with host MYC; this interaction enhances MYC stability. Interacts (via N-terminus) with host RBPJ. Interacts (via N-terminus) with host histone H2AX; this interaction facilitates H2AX proteasomal degradation. Interacts with host TP73; this interaction inhibits TP73-mediated apoptotic pathway. Interacts (via N-terminus) with host PIM1; this interaction upregulates and stabilizes PIM1 and induces cell proliferation by inhibiting the growth suppressive properties of p21.

The protein localises to the host nucleus. Its subcellular location is the host nucleus matrix. Its function is as follows. Plays an essential role for the activation and immortalization of human B-cells. Represses transcription of viral promoters TP1 and Cp through interaction with host RBPJ, and inhibits EBNA2-mediated activation of these promoters. Targets host chromatin through interactions with host transcription factors, especially RBPJ and IRF4. Alternatively, EBNA6 also regulates the transcription of the EBV oncogene LMP1 in a cell cycle-dependent manner. Modulates the activity of several host proteins involved in cell cycle regulation including host cyclin A, MYC, RB, p21 and p27 mainly through binding to the host SCF(SKP2) complex. Inhibits the promoter of host H2AX and targets H2AX to proteasomal degradation in order to promote latency and cell proliferation. Upregulates host PIM1 expression and stabilization. Potentiates PIM1 to promote cell proliferation by inhibiting the growth suppressive properties of p21. The polypeptide is Epstein-Barr nuclear antigen 6 (EBNA6) (Epstein-Barr virus (strain GD1) (HHV-4)).